The following is a 258-amino-acid chain: uncharacterized protein (258 aa).

6 consecutive transmembrane segments (helical) span residues 24–44, 70–90, 100–120, 130–150, 157–177, and 181–201; these read IPLF…VNIF, PLVH…FLLM, LCTI…AYLI, VYVG…LNLF, LLNL…VLGL, and FSIT…FSFA. Residue H188 is part of the active site.

The protein belongs to the peptidase S54 family.

Its subcellular location is the golgi apparatus membrane. This is an uncharacterized protein from Schizosaccharomyces pombe (strain 972 / ATCC 24843) (Fission yeast).